A 433-amino-acid chain; its full sequence is Glutamate-1-semialdehyde 2,1-aminomutase (433 aa).

At lysine 273 the chain carries N6-(pyridoxal phosphate)lysine.

It belongs to the class-III pyridoxal-phosphate-dependent aminotransferase family. HemL subfamily. In terms of assembly, homodimer. It depends on pyridoxal 5'-phosphate as a cofactor.

It localises to the cytoplasm. It carries out the reaction (S)-4-amino-5-oxopentanoate = 5-aminolevulinate. It participates in porphyrin-containing compound metabolism; protoporphyrin-IX biosynthesis; 5-aminolevulinate from L-glutamyl-tRNA(Glu): step 2/2. Its pathway is porphyrin-containing compound metabolism; chlorophyll biosynthesis. This Crocosphaera subtropica (strain ATCC 51142 / BH68) (Cyanothece sp. (strain ATCC 51142)) protein is Glutamate-1-semialdehyde 2,1-aminomutase.